The primary structure comprises 442 residues: Putative pyrimidine permease RutG (442 aa).

The Cytoplasmic portion of the chain corresponds to 1 to 57 (MAMFGFPHWQLKSTSTESGVVAPDERLPFAQTAVMGVQHAVAMFGATVLMPILMGLD). Residues 58 to 78 (PNLSILMSGIGTLLFFFITGG) form a helical membrane-spanning segment. Residue R79 is a topological domain, periplasmic. The helical transmembrane segment at 80–100 (VPSYLGSSAAFVGVVIAATGF) threads the bilayer. The Cytoplasmic portion of the chain corresponds to 101–110 (NGQGINPNIS). Residues 111 to 131 (IALGGIIACGLVYTVIGLVVM) traverse the membrane as a helical segment. Residues 132–140 (KIGTRWIER) are Periplasmic-facing. The helical transmembrane segment at 141–161 (LMPPVVTGAVVMAIGLNLAPI) threads the bilayer. Over 162–169 (AVKSVSAS) the chain is Cytoplasmic. A helical membrane pass occupies residues 170–190 (AFDSWMAVMTVLCIGLVAVFT). At 191–196 (RGMIQR) the chain is on the periplasmic side. A helical transmembrane segment spans residues 197–217 (LLILVGLIVACLLYGVMTNVL). The Cytoplasmic segment spans residues 218-240 (GLGKAVDFTLVSHAAWFGLPHFS). Residues 241-261 (TPAFNGQAMMLIAPVAVILVA) form a helical membrane-spanning segment. Residues 262–284 (ENLGHLKAVAGMTGRNMDPYMGR) are Periplasmic-facing. A helical membrane pass occupies residues 285–305 (AFVGDGLATMLSGSVGGSGVT). Topologically, residues 306–318 (TYAENIGVMAVTK) are cytoplasmic. A helical transmembrane segment spans residues 319-339 (VYSTLVFVAAAVIAMLLGFSP). Residues 340 to 347 (KFGALIHT) lie on the Periplasmic side of the membrane. A helical membrane pass occupies residues 348–368 (IPAAVIGGASIVVFGLIAVAG). At 369–385 (ARIWVQNRVDLSQNGNL) the chain is on the cytoplasmic side. A run of 2 helical transmembrane segments spans residues 386-406 (IMVA…LGGF) and 407-427 (TLGG…LLSR). Residues 428 to 442 (KLVDVPPPEVVHQEP) lie on the Cytoplasmic side of the membrane.

It belongs to the nucleobase:cation symporter-2 (NCS2) (TC 2.A.40) family.

It is found in the cell inner membrane. May function as a proton-driven pyrimidine uptake system. The polypeptide is Putative pyrimidine permease RutG (rutG) (Escherichia coli (strain K12)).